Consider the following 270-residue polypeptide: Orotidine 5'-phosphate decarboxylase (270 aa).

Residues Asp-43, 65-67, 96-105, Tyr-217, and Arg-236 contribute to the substrate site; these read KTH and DRKFGDIGST. Lys-98 functions as the Proton donor in the catalytic mechanism.

This sequence belongs to the OMP decarboxylase family.

The catalysed reaction is orotidine 5'-phosphate + H(+) = UMP + CO2. Its pathway is pyrimidine metabolism; UMP biosynthesis via de novo pathway; UMP from orotate: step 2/2. The protein is Orotidine 5'-phosphate decarboxylase (URA3) of Aureobasidium pullulans (Black yeast).